A 775-amino-acid polypeptide reads, in one-letter code: Polyribonucleotide nucleotidyltransferase (775 aa).

The disordered stretch occupies residues 223 to 247 (DEQVPEKPRKGRRRGRKSSPRKKTD). Residues 231–243 (RKGRRRGRKSSPR) are compositionally biased toward basic residues. Residues Asp567 and Asp573 each contribute to the Mg(2+) site. Residues 633–692 (PRITTISVPVSKIGEVIGPKGKNINQITEDTGARVSIEDDGTVFISATSGGSAEAAVDRI) enclose the KH domain. An S1 motif domain is found at 704–773 (GERFLGTVVK…NRGKISLVPV (70 aa)).

It belongs to the polyribonucleotide nucleotidyltransferase family. The cofactor is Mg(2+).

The protein localises to the cytoplasm. It catalyses the reaction RNA(n+1) + phosphate = RNA(n) + a ribonucleoside 5'-diphosphate. Involved in mRNA degradation. Catalyzes the phosphorolysis of single-stranded polyribonucleotides processively in the 3'- to 5'-direction. This Corynebacterium kroppenstedtii (strain DSM 44385 / JCM 11950 / CIP 105744 / CCUG 35717) protein is Polyribonucleotide nucleotidyltransferase.